The following is a 308-amino-acid chain: Aspartate carbamoyltransferase catalytic subunit (308 aa).

Carbamoyl phosphate-binding residues include R55 and T56. K83 is an L-aspartate binding site. Carbamoyl phosphate is bound by residues R105, H133, and Q136. Positions 166 and 220 each coordinate L-aspartate. Carbamoyl phosphate-binding residues include G261 and P262.

The protein belongs to the aspartate/ornithine carbamoyltransferase superfamily. ATCase family. In terms of assembly, heterododecamer (2C3:3R2) of six catalytic PyrB chains organized as two trimers (C3), and six regulatory PyrI chains organized as three dimers (R2).

It catalyses the reaction carbamoyl phosphate + L-aspartate = N-carbamoyl-L-aspartate + phosphate + H(+). The protein operates within pyrimidine metabolism; UMP biosynthesis via de novo pathway; (S)-dihydroorotate from bicarbonate: step 2/3. Catalyzes the condensation of carbamoyl phosphate and aspartate to form carbamoyl aspartate and inorganic phosphate, the committed step in the de novo pyrimidine nucleotide biosynthesis pathway. The protein is Aspartate carbamoyltransferase catalytic subunit of Chlorobaculum parvum (strain DSM 263 / NCIMB 8327) (Chlorobium vibrioforme subsp. thiosulfatophilum).